Consider the following 524-residue polypeptide: Peptide chain release factor 3 (524 aa).

The tr-type G domain occupies 11 to 278 (AKRRTFAIIS…SFVQYAPEPG (268 aa)). Residues 20–27 (SHPDAGKT), 88–92 (DTPGH), and 142–145 (NKLD) contribute to the GTP site.

This sequence belongs to the TRAFAC class translation factor GTPase superfamily. Classic translation factor GTPase family. PrfC subfamily.

It is found in the cytoplasm. Its function is as follows. Increases the formation of ribosomal termination complexes and stimulates activities of RF-1 and RF-2. It binds guanine nucleotides and has strong preference for UGA stop codons. It may interact directly with the ribosome. The stimulation of RF-1 and RF-2 is significantly reduced by GTP and GDP, but not by GMP. In Lacticaseibacillus paracasei (strain ATCC 334 / BCRC 17002 / CCUG 31169 / CIP 107868 / KCTC 3260 / NRRL B-441) (Lactobacillus paracasei), this protein is Peptide chain release factor 3.